Here is a 334-residue protein sequence, read N- to C-terminus: Ornithine carbamoyltransferase (334 aa).

Carbamoyl phosphate-binding positions include serine 57–threonine 60, glutamine 84, arginine 108, and histidine 135–glutamine 138. Residues asparagine 168, aspartate 232, and serine 236–methionine 237 contribute to the L-ornithine site. Residues cysteine 274–leucine 275 and arginine 321 each bind carbamoyl phosphate.

Belongs to the aspartate/ornithine carbamoyltransferase superfamily. OTCase family.

It localises to the cytoplasm. The catalysed reaction is carbamoyl phosphate + L-ornithine = L-citrulline + phosphate + H(+). It functions in the pathway amino-acid biosynthesis; L-arginine biosynthesis; L-arginine from L-ornithine and carbamoyl phosphate: step 1/3. In terms of biological role, reversibly catalyzes the transfer of the carbamoyl group from carbamoyl phosphate (CP) to the N(epsilon) atom of ornithine (ORN) to produce L-citrulline. The sequence is that of Ornithine carbamoyltransferase from Actinobacillus pleuropneumoniae serotype 5b (strain L20).